The primary structure comprises 145 residues: Immunoglobulin iota chain (145 aa).

A signal peptide spans 1-19; it reads MSWAPVLLMLFVYCTGCGP. Residues 20–41 form a framework-1 region; it reads QPVLHQPPAMSSALGTTIRLTC. The 113-residue stretch at 20–132 folds into the Ig-like V-type domain; that stretch reads QPVLHQPPAM…EKEEREREWE (113 aa). Cys41 and Cys115 are joined by a disulfide. The tract at residues 42–56 is complementarity-determining-1; that stretch reads TLRNDHDIGVYSVYW. A framework-2 region spans residues 57–70; sequence YQQRPGHPPRFLLR. A complementarity-determining-2 region spans residues 71 to 81; it reads YFSQSDKSQGP. The framework-3 stretch occupies residues 82–115; the sequence is QVPPRFSGSKDVARNRGYLSISELQPEDEAMYYC. A compositionally biased stretch (basic and acidic residues) spans 121-130; the sequence is SSEKEERERE. The interval 121–145 is disordered; that stretch reads SSEKEEREREWEEEMEPTAARTRVP.

Belongs to the immunoglobulin superfamily. Interacts with IGLL1. Interacts with SYNV1/HRD1 (via N-terminus); this interaction leads to increased VPREB1 ubiquitination and degradation in pre-B cells, possibly through a lysosomal, not proteasomal, pathway. Only expressed by pre-B-cells.

The protein localises to the endoplasmic reticulum. Its function is as follows. Associates with the Ig-mu chain to form a molecular complex that is expressed on the surface of pre-B-cells. This complex presumably regulates Ig gene rearrangements in the early steps of B-cell differentiation. The sequence is that of Immunoglobulin iota chain (VPREB1) from Homo sapiens (Human).